The sequence spans 465 residues: ATP synthase subunit beta (465 aa).

ATP is bound at residue 148-155 (GGAGVGKT).

It belongs to the ATPase alpha/beta chains family. F-type ATPases have 2 components, CF(1) - the catalytic core - and CF(0) - the membrane proton channel. CF(1) has five subunits: alpha(3), beta(3), gamma(1), delta(1), epsilon(1). CF(0) has three main subunits: a(1), b(2) and c(9-12). The alpha and beta chains form an alternating ring which encloses part of the gamma chain. CF(1) is attached to CF(0) by a central stalk formed by the gamma and epsilon chains, while a peripheral stalk is formed by the delta and b chains.

It is found in the cell inner membrane. It carries out the reaction ATP + H2O + 4 H(+)(in) = ADP + phosphate + 5 H(+)(out). In terms of biological role, produces ATP from ADP in the presence of a proton gradient across the membrane. The catalytic sites are hosted primarily by the beta subunits. The chain is ATP synthase subunit beta from Neisseria meningitidis serogroup B (strain ATCC BAA-335 / MC58).